Reading from the N-terminus, the 183-residue chain is Putative calmodulin-like protein 2 (183 aa).

EF-hand domains are found at residues 7-42 (EQIAEFREAFNLFDKDGDGTITSKELGTVMGSLGQS), 43-78 (PTEAELKKMVEEVDADGSGSIEFEEFLGLLARKLRD), 80-115 (GAEDDIREAFRVFDKDQNGFITPDELRHVMANLGDP), and 116-151 (LSDDELADMLHEADSDGDGQINYNEFLKVMMAKRRQ). Ca(2+)-binding residues include Asp-20, Asp-22, Asp-24, Thr-26, Glu-31, Asp-56, Asp-58, Ser-60, Ser-62, Glu-67, Asp-93, Asp-95, Asn-97, Glu-104, Asp-129, Asp-131, Asp-133, Gln-135, and Glu-140. The segment at 154-183 (MEGHGSGGHRSSNSHKKSGCCGPNSSCTIL) is disordered. S-palmitoyl cysteine attachment occurs at residues Cys-173 and Cys-174. Cys-180 bears the Cysteine methyl ester mark. A lipid anchor (S-farnesyl cysteine) is attached at Cys-180. A propeptide spans 181–183 (TIL) (removed in mature form).

The protein belongs to the calmodulin family.

Its subcellular location is the membrane. In terms of biological role, potential calcium sensor. The chain is Putative calmodulin-like protein 2 (CML2) from Oryza sativa subsp. japonica (Rice).